The sequence spans 168 residues: Putative peroxiredoxin prxA (168 aa).

The Thioredoxin domain maps to 4 to 158 (LKAGDSFPAD…LEPAKNHLEF (155 aa)). C61 serves as the catalytic Cysteine sulfenic acid (-SOH) intermediate.

It belongs to the peroxiredoxin family. Prx5 subfamily. Homodimer; disulfide-linked, upon oxidation. Interacts with thioredoxin trxA.

It catalyses the reaction a hydroperoxide + [thioredoxin]-dithiol = an alcohol + [thioredoxin]-disulfide + H2O. Functionally, thiol-specific peroxidase that catalyzes the reduction of hydrogen peroxide and organic hydroperoxides to water and alcohols, respectively. Plays a role in cell protection against oxidative stress by detoxifying peroxides and as sensor of hydrogen peroxide-mediated signaling events. Involved in osmoadaptation. The sequence is that of Putative peroxiredoxin prxA from Emericella nidulans (strain FGSC A4 / ATCC 38163 / CBS 112.46 / NRRL 194 / M139) (Aspergillus nidulans).